The chain runs to 1172 residues: Thrombospondin-2 (1172 aa).

The first 18 residues, 1-18, serve as a signal peptide directing secretion; that stretch reads MLWALALLALGIGPRASA. The region spanning 19–215 is the Laminin G-like domain; that stretch reads GDHVKDTSFD…LQNVHLVFAD (197 aa). Positions 19-232 are heparin-binding; that stretch reads GDHVKDTSFD…KKGCQHSQGA (214 aa). Residues N151, N316, and N330 are each glycosylated (N-linked (GlcNAc...) asparagine). The region spanning 318-375 is the VWFC domain; the sequence is SACVQEGRIFAENETWVVDSCTTCTCKKFKTVCHQITCSPATCANPSFVEGECCPSCS. TSP type-1 domains follow at residues 381–431, 437–492, and 494–549; these read DEGW…GKCD, NGGW…DPCP, and DGRW…RSCP. 27 disulfides stabilise this stretch: C393–C425, C397–C430, C408–C415, C449–C486, C453–C491, C464–C476, C506–C543, C510–C548, C521–C533, C553–C564, C558–C574, C577–C588, C594–C610, C601–C619, C622–C646, C652–C665, C659–C678, C680–C691, C707–C715, C720–C740, C756–C776, C779–C799, C815–C835, C838–C858, C876–C896, C912–C932, and C948–C1169. N-linked (GlcNAc...) asparagine glycosylation occurs at N457. An EGF-like 1 domain is found at 549-589; that stretch reads PIDGCLSNPCFPGAKCNSFPDGSWSCGSCPVGFLGNGTHCE. N584 carries an N-linked (GlcNAc...) asparagine glycan. One can recognise an EGF-like 2 domain in the interval 648–692; sequence PENPCKDKTHSCHKNAECIYLGHFSDPMYKCECQIGYAGDGLICG. TSP type-3 repeat units follow at residues 693 to 728, 729 to 764, 765 to 787, 788 to 823, 824 to 846, 847 to 884, 885 to 920, and 921 to 956; these read EDSDLDGWPNNNLVCATNATYHCIKDNCPKLPNSGQ, EDFDKDGIGDACDEDDDNDGVSDEKDNCQLLFNPRQ, LDYDKDEVGDRCDNCPYVHNPAQ, IDTDNNGEGDACSVDIDGDDVFNERDNCPYVYNTDQ, RDTDGDGVGDHCDNCPLMHNPDQ, IDQDNDLVGDQCDNNEDIDDDGHQNNQDNCPYISNSNQ, ADHDNDGKGDACDSDDDNDGVPDDRDNCRLVFNPDQ, and EDSDGDGRGDICKDDFDNDNVPDIDDVCPENNAITE. The N-linked (GlcNAc...) asparagine glycan is linked to N710. Residues 727-752 form a disordered region; it reads GQEDFDKDGIGDACDEDDDNDGVSDE. Acidic residues predominate over residues 739-749; it reads ACDEDDDNDGV. Residues 846 to 938 form a disordered region; that stretch reads QIDQDNDLVG…GDICKDDFDN (93 aa). The segment covering 847-866 has biased composition (acidic residues); it reads IDQDNDLVGDQCDNNEDIDD. A compositionally biased stretch (polar residues) spans 870–884; the sequence is QNNQDNCPYISNSNQ. A compositionally biased stretch (basic and acidic residues) spans 885–895; sequence ADHDNDGKGDA. The span at 896–905 shows a compositional bias: acidic residues; that stretch reads CDSDDDNDGV. The span at 925 to 935 shows a compositional bias: basic and acidic residues; the sequence is GDGRGDICKDD. The short motif at 928–930 is the Cell attachment site element; the sequence is RGD. One can recognise a TSP C-terminal domain in the interval 960 to 1172; it reads RNFQMVPLDP…SDLKYECRDA (213 aa). N-linked (GlcNAc...) asparagine glycosylation occurs at N1069.

This sequence belongs to the thrombospondin family. Homotrimer; disulfide-linked. Can bind to fibrinogen, fibronectin, laminin and type V collagen. Interacts (via the TSP type I repeats) with CD36; the interaction conveys an antiangiogenic effect. Interacts (via the TSP type I repeats) with HRG; the interaction blocks the antiangiogenic effect of THBS2 with CD36. Can bind to fibrinogen, fibronectin, laminin.

Its function is as follows. Adhesive glycoprotein that mediates cell-to-cell and cell-to-matrix interactions. Ligand for CD36 mediating antiangiogenic properties. The sequence is that of Thrombospondin-2 (Thbs2) from Mus musculus (Mouse).